The following is a 209-amino-acid chain: Auxin-binding protein ABP19a (209 aa).

The first 18 residues, 1 to 18, serve as a signal peptide directing secretion; sequence MIFPIFFTFFLLLSSSHA. A disulfide bridge links Cys-24 with Cys-39. One can recognise a Cupin type-1 domain in the interval 53–199; it reads SGLGIAGNTT…TTFLDAAQIK (147 aa). N-linked (GlcNAc...) asparagine glycosylation is present at Asn-60. Residues His-101, His-103, Glu-108, and His-147 each contribute to the Mn(2+) site.

This sequence belongs to the germin family. As to quaternary structure, interacts with ABP20.

It localises to the secreted. It is found in the extracellular space. The protein resides in the apoplast. The protein localises to the cell wall. In terms of biological role, probable receptor for the plant growth-promoting hormone auxin. The chain is Auxin-binding protein ABP19a (ABP19A) from Prunus persica (Peach).